Reading from the N-terminus, the 88-residue chain is Augerpeptide Hhe9a (88 aa).

An N-terminal signal peptide occupies residues 1-21 (MMTKTGLVLLFAFLLVFPVSS). The propeptide occupies 22 to 49 (LPMDAEAGHARLEMDKRDAGNEAWTRLL). 3 cysteine pairs are disulfide-bonded: Cys-56-Cys-71, Cys-61-Cys-73, and Cys-67-Cys-86.

Expressed by the venom duct.

Its subcellular location is the secreted. The chain is Augerpeptide Hhe9a from Hastula hectica (Sea snail).